The sequence spans 626 residues: Two-component response regulator ORR24 (626 aa).

The disordered stretch occupies residues 1 to 22 (MTVEERQGRVGGHGVSGGGGGR). Residues 9-22 (RVGGHGVSGGGGGR) are compositionally biased toward gly residues. The Response regulatory domain maps to 30–145 (RVLAVDDDPT…QLRTIWQHVI (116 aa)). Residue D81 is modified to 4-aspartylphosphate. Residues 151-162 (DAKNRGNDDDAG) show a composition bias toward basic and acidic residues. Disordered regions lie at residues 151-215 (DAKN…KKPR) and 400-440 (LQPL…RTTN). Positions 191-202 (NGDDGDDSDENS) are enriched in acidic residues. The myb-like GARP DNA-binding region spans 210-269 (TQKKPRVVWSVELHRKFVAAVNQLGIEKAVPKKILDLMNVENITRENVASHLQKYRLYLK). The segment covering 400-421 (LQPLESSSQQHLSRVHSSSADP) has biased composition (polar residues).

Belongs to the ARR family. Type-B subfamily. In terms of processing, two-component system major event consists of a His-to-Asp phosphorelay between a sensor histidine kinase (HK) and a response regulator (RR). In plants, the His-to-Asp phosphorelay involves an additional intermediate named Histidine-containing phosphotransfer protein (HPt). This multistep phosphorelay consists of a His-Asp-His-Asp sequential transfer of a phosphate group between first a His and an Asp of the HK protein, followed by the transfer to a conserved His of the HPt protein and finally the transfer to an Asp in the receiver domain of the RR protein.

Its subcellular location is the nucleus. Transcriptional activator that binds specific DNA sequence. Functions as a response regulator involved in His-to-Asp phosphorelay signal transduction system. Phosphorylation of the Asp residue in the receiver domain activates the ability of the protein to promote the transcription of target genes. May directly activate some type-A response regulators in response to cytokinins. This chain is Two-component response regulator ORR24, found in Oryza sativa subsp. indica (Rice).